The following is a 439-amino-acid chain: Cell division protein DivIB (439 aa).

Disordered stretches follow at residues 1 to 96 (MDDK…DSNI) and 119 to 149 (DNEQ…KSKV). Residues 1–173 (MDDKTKNDQQ…RRKRQKRIQY (173 aa)) are Cytoplasmic-facing. Acidic residues predominate over residues 11–20 (ESNEDKDELE). A compositionally biased stretch (basic residues) spans 26–38 (TSKKRRQRKRSKA). Residues 64 to 76 (KDFKKEESNDKNN) show a composition bias toward basic and acidic residues. Positions 77 to 86 (DSASSHANDN) are enriched in low complexity. Residues 87-96 (NIDDSTDSNI) show a composition bias toward acidic residues. The span at 119 to 133 (DNEQPQSAPKEQNSD) shows a compositional bias: polar residues. A helical transmembrane segment spans residues 174–194 (SVITILVLLIAVILIYMFSPL). Residues 195-263 (SKIAHVNING…NTLNVDITEN (69 aa)) form the POTRA domain. The Extracellular segment spans residues 195–439 (SKIAHVNING…KINKQSSKNN (245 aa)). The segment at 396-439 (YRGNTSSQSESDKNVTKSSQEENQAKEELQSVLNKINKQSSKNN) is disordered. Positions 405–424 (ESDKNVTKSSQEENQAKEEL) are enriched in basic and acidic residues. Positions 426–439 (SVLNKINKQSSKNN) are enriched in polar residues.

It belongs to the FtsQ/DivIB family. DivIB subfamily.

It is found in the cell membrane. Cell division protein that may be involved in stabilizing or promoting the assembly of the division complex. The protein is Cell division protein DivIB of Staphylococcus aureus (strain NCTC 8325 / PS 47).